Reading from the N-terminus, the 604-residue chain is ATP-dependent RNA helicase DBP1 (604 aa).

Residues 1–79 are disordered; sequence MSDGSGRYVP…RASGSGGFGG (79 aa). The span at 32–45 shows a compositional bias: polar residues; sequence SRYSGNGFFSSPNR. The Q motif signature appears at 138-166; that stretch reads TEFKSPPLDELLLENVELANFSKPTPVQK. Residues 169 to 358 enclose the Helicase ATP-binding domain; it reads IPIVTKNRDL…RDFLKDYIFL (190 aa). 182-189 provides a ligand contact to ATP; the sequence is AQTGSGKT. The DEAD box signature appears at 302 to 305; it reads DEAD. Positions 386–529 constitute a Helicase C-terminal domain; it reads LLDILINEID…EVPQFLVNMV (144 aa). Residues 535 to 591 are disordered; the sequence is FGRGGRNSRTGSNRGRGSNTRDYRHSNKDDWGSLGSSRRGFRSNDNRGFGNNWGSSS. The segment covering 541–552 has biased composition (low complexity); it reads NSRTGSNRGRGS. Positions 553–565 are enriched in basic and acidic residues; that stretch reads NTRDYRHSNKDDW.

This sequence belongs to the DEAD box helicase family. DDX3/DED1 subfamily.

Its subcellular location is the cytoplasm. The catalysed reaction is ATP + H2O = ADP + phosphate + H(+). In terms of biological role, ATP-binding RNA helicase involved in translation initiation. Remodels RNA in response to ADP and ATP concentrations by facilitating disruption, but also formation of RNA duplexes. Redundant to DED1, may be required in conditions in which DED1 expression is decreased. This Candida glabrata (strain ATCC 2001 / BCRC 20586 / JCM 3761 / NBRC 0622 / NRRL Y-65 / CBS 138) (Yeast) protein is ATP-dependent RNA helicase DBP1 (DBP1).